Reading from the N-terminus, the 590-residue chain is Auxin response factor 20 (590 aa).

Positions 126–224 (FTKVLTASDT…ELRVGIRRAR (99 aa)) form a DNA-binding region, TF-B3. The PB1 domain occupies 495 to 576 (RTCTKVQMQG…MVKKILIYSK (82 aa)).

The protein belongs to the ARF family. As to quaternary structure, homodimers and heterodimers.

It is found in the nucleus. Auxin response factors (ARFs) are transcriptional factors that bind specifically to the DNA sequence 5'-TGTCTC-3' found in the auxin-responsive promoter elements (AuxREs). Could act as transcriptional activator or repressor. Formation of heterodimers with Aux/IAA proteins may alter their ability to modulate early auxin response genes expression. The protein is Auxin response factor 20 (ARF20) of Arabidopsis thaliana (Mouse-ear cress).